The chain runs to 442 residues: Histidine--tRNA ligase (442 aa).

Belongs to the class-II aminoacyl-tRNA synthetase family. As to quaternary structure, homodimer.

It localises to the cytoplasm. The enzyme catalyses tRNA(His) + L-histidine + ATP = L-histidyl-tRNA(His) + AMP + diphosphate + H(+). This is Histidine--tRNA ligase (hisS) from Helicobacter pylori (strain J99 / ATCC 700824) (Campylobacter pylori J99).